Consider the following 145-residue polypeptide: Eukaryotic translation initiation factor 1A (145 aa).

Residues 1–15 (MPKNKGKGGKNRKRG) are compositionally biased toward basic residues. The segment at 1 to 25 (MPKNKGKGGKNRKRGKNEADDDKRE) is disordered. Basic and acidic residues predominate over residues 16-25 (KNEADDDKRE). One can recognise an S1-like domain in the interval 22-96 (DKRELVFKED…DKADVILKLM (75 aa)).

It belongs to the eIF-1A family.

Functionally, seems to be required for maximal rate of protein biosynthesis. Enhances ribosome dissociation into subunits and stabilizes the binding of the initiator Met-tRNA(I) to 40 S ribosomal subunits. This is Eukaryotic translation initiation factor 1A from Onobrychis viciifolia (Common sainfoin).